The primary structure comprises 201 residues: Holliday junction branch migration complex subunit RuvA (201 aa).

The segment at 1 to 64 (MIGFIRGLLV…EDAHSLFGFG (64 aa)) is domain I. Residues 65-143 (TEAERGLFRS…IGVPSLAPAS (79 aa)) are domain II. The segment at 144–153 (FAGGAAPLPA) is flexible linker. The interval 153–201 (AADPADEAVSALIALGFKPQEANTLVARQAAEGRSAEDLIRAALQSAVR) is domain III.

This sequence belongs to the RuvA family. Homotetramer. Forms an RuvA(8)-RuvB(12)-Holliday junction (HJ) complex. HJ DNA is sandwiched between 2 RuvA tetramers; dsDNA enters through RuvA and exits via RuvB. An RuvB hexamer assembles on each DNA strand where it exits the tetramer. Each RuvB hexamer is contacted by two RuvA subunits (via domain III) on 2 adjacent RuvB subunits; this complex drives branch migration. In the full resolvosome a probable DNA-RuvA(4)-RuvB(12)-RuvC(2) complex forms which resolves the HJ.

The protein resides in the cytoplasm. Functionally, the RuvA-RuvB-RuvC complex processes Holliday junction (HJ) DNA during genetic recombination and DNA repair, while the RuvA-RuvB complex plays an important role in the rescue of blocked DNA replication forks via replication fork reversal (RFR). RuvA specifically binds to HJ cruciform DNA, conferring on it an open structure. The RuvB hexamer acts as an ATP-dependent pump, pulling dsDNA into and through the RuvAB complex. HJ branch migration allows RuvC to scan DNA until it finds its consensus sequence, where it cleaves and resolves the cruciform DNA. The polypeptide is Holliday junction branch migration complex subunit RuvA (Methylococcus capsulatus (strain ATCC 33009 / NCIMB 11132 / Bath)).